A 955-amino-acid chain; its full sequence is GPI inositol-deacylase B (955 aa).

Residue Asn-7 is glycosylated (N-linked (GlcNAc...) asparagine). A helical membrane pass occupies residues 8 to 28 (ASVALWTVFTILTIWISFALH). Residue Ser-180 is part of the active site. Asn-431 is a glycosylation site (N-linked (GlcNAc...) asparagine). A run of 4 helical transmembrane segments spans residues 489-509 (IAFPALTSGLISYKVLTSGGV), 600-620 (LLFSLPTAVLYAVLLLQFWRY), 643-663 (YLSWACLVVAGLSFVIKFEFI), and 703-723 (PIGVVLAPAFLALATGIVVVV). Asn-753 carries N-linked (GlcNAc...) asparagine glycosylation. Helical transmembrane passes span 772-792 (VIIALMALLVLLFVPYQLAFA), 840-860 (TMSVVMVWTTLVNIPVLAVWV), and 870-890 (IFSSHHNLLSVLPTLLFIENL). Asn-914 carries an N-linked (GlcNAc...) asparagine glycan. Residues 919-939 (GMMHAFMIHHWFNLLAGWLLI) traverse the membrane as a helical segment. Asn-945 carries N-linked (GlcNAc...) asparagine glycosylation.

Belongs to the GPI inositol-deacylase family.

The protein localises to the endoplasmic reticulum membrane. Functionally, involved in inositol deacylation of GPI-anchored proteins which plays important roles in the quality control and ER-associated degradation of GPI-anchored proteins. This Yarrowia lipolytica (strain CLIB 122 / E 150) (Yeast) protein is GPI inositol-deacylase B (BST1B).